The following is a 90-amino-acid chain: YcgL domain-containing protein plu2139 (90 aa).

Residues 1–85 form the YcgL domain; the sequence is MICAIYSSPK…PVENLMNAHL (85 aa).

The chain is YcgL domain-containing protein plu2139 from Photorhabdus laumondii subsp. laumondii (strain DSM 15139 / CIP 105565 / TT01) (Photorhabdus luminescens subsp. laumondii).